Reading from the N-terminus, the 399-residue chain is MAKEKFSRNKPHVNIGTIGHVDHGKTTLTAAISAVLSRRGLAELKDYDNIDNAPEEKERGITIATSHIEYETENRHYAHVDCPGHADYVKNMITGAAQMDGAILVVSAADGPMPQTREHILLSRQVGVPYIVVFMNKADMVDDAELLELVEMEIRELLSSYDFPGDDTPIISGSALQALEEAKAGQDGEWSKKILDLMAAVDDYIPTPARDTDKDFLMPIEDVFSISGRGTVVTGRIEKGVVKVGDTIEIVGIRDTQTTTVTGVEMFRKEMDQGEAGDNVGVLLRGTKKEDVERGMVLAKPKSITPHTDFEAEVYILNKDEGGRHTPFFNNYRPQFYVRTTDVTGAIKLAEGVEMVMPGDNVRITVSLIAPVALEEGTRFAIREGGRTVGSGVVSKIIK.

Positions Lys-10–Ala-209 constitute a tr-type G domain. A G1 region spans residues Gly-19 to Thr-26. Gly-19–Thr-26 lines the GTP pocket. Thr-26 contributes to the Mg(2+) binding site. The segment at Gly-60–Ala-64 is G2. Positions Asp-81–Gly-84 are G3. Residues Asp-81–His-85 and Asn-136–Asp-139 each bind GTP. A G4 region spans residues Asn-136–Asp-139. The segment at Ser-174–Leu-176 is G5.

It belongs to the TRAFAC class translation factor GTPase superfamily. Classic translation factor GTPase family. EF-Tu/EF-1A subfamily. Monomer.

The protein resides in the cytoplasm. It carries out the reaction GTP + H2O = GDP + phosphate + H(+). In terms of biological role, GTP hydrolase that promotes the GTP-dependent binding of aminoacyl-tRNA to the A-site of ribosomes during protein biosynthesis. The chain is Elongation factor Tu from Campylobacter lari (strain RM2100 / D67 / ATCC BAA-1060).